The following is an 84-amino-acid chain: Subtilisin-chymotrypsin inhibitor-2A (84 aa).

The tract at residues 1 to 23 is disordered; that stretch reads MSSVEKKPEGVNTGAGDRHNLKT.

Belongs to the protease inhibitor I13 (potato type I serine protease inhibitor) family.

Its function is as follows. Inhibits both subtilisin and chymotrypsin. This chain is Subtilisin-chymotrypsin inhibitor-2A, found in Hordeum vulgare (Barley).